A 210-amino-acid chain; its full sequence is uncharacterized protein (210 aa).

This is an uncharacterized protein from Dictyostelium discoideum (Social amoeba).